Reading from the N-terminus, the 202-residue chain is Phospholipase A2 inhibitor gamma subunit A (202 aa).

A signal peptide spans 1 to 19 (MKSLQIICLLFIFVARGSC). Intrachain disulfides connect C22-C47, C25-C32, C40-C68, C74-C95, C96-C101, C119-C144, C137-C166, and C170-C192.

Belongs to the CNF-like-inhibitor family. In terms of assembly, heteromer composed of subunit A and subunit B. As to expression, expressed by the liver.

Its subcellular location is the secreted. In terms of biological role, inhibits the enzymatic activity of the phospholipase A2 (PLA2). This Elaphe climacophora (Japanese rat snake) protein is Phospholipase A2 inhibitor gamma subunit A.